The following is a 116-amino-acid chain: Ribonuclease P protein component (116 aa).

The protein belongs to the RnpA family. As to quaternary structure, consists of a catalytic RNA component (M1 or rnpB) and a protein subunit.

The enzyme catalyses Endonucleolytic cleavage of RNA, removing 5'-extranucleotides from tRNA precursor.. Functionally, RNaseP catalyzes the removal of the 5'-leader sequence from pre-tRNA to produce the mature 5'-terminus. It can also cleave other RNA substrates such as 4.5S RNA. The protein component plays an auxiliary but essential role in vivo by binding to the 5'-leader sequence and broadening the substrate specificity of the ribozyme. This chain is Ribonuclease P protein component, found in Picosynechococcus sp. (strain ATCC 27264 / PCC 7002 / PR-6) (Agmenellum quadruplicatum).